Reading from the N-terminus, the 736-residue chain is Segment polarity protein dishevelled homolog DVL-2 (736 aa).

Residues methionine 1 to glutamate 82 form the DIX domain. The tract at residues alanine 79 to serine 241 is disordered. Over residues glutamate 100–alanine 114 the composition is skewed to pro residues. The span at methionine 149 to serine 160 shows a compositional bias: basic and acidic residues. Residues glutamate 181–isoleucine 195 show a composition bias toward low complexity. The span at serine 205–serine 217 shows a compositional bias: polar residues. The span at leucine 219–proline 231 shows a compositional bias: basic residues. One can recognise a PDZ domain in the interval threonine 254–aspartate 326. The tract at residues isoleucine 327 to serine 427 is interaction with custos. One can recognise a DEP domain in the interval proline 428–aspartate 502. Low complexity-rich tracts occupy residues methionine 574 to serine 593 and lysine 616 to serine 629. Residues methionine 574–alanine 664 form a disordered region.

It belongs to the DSH family. Can form homomultimers. Interacts with prickle1. Interacts (via PDZ domain) with ccdc88c/dal and dact1-B/dpr. Interacts (via DIX domain) with ARP/Axin-related protein and dact1-A/frodo. Interacts with sdc4, possibly via fz7. Interacts directly (via DEP domain) with efnb1/ephrin-B1 and indirectly with the phosphorylated ephrin receptors ephb1 and ephb2, via association with SH domain-containing adapters. May interact with lrrc6. Interacts with custos (via NLS1 and NLS2); the interaction is negatively regulated by Wnt stimulation. Post-translationally, phosphorylated. Phosphorylation is controlled by frizzled proteins, correlates with the onset of embryo dorsalizing events and is higher in the dorsal half of early cleavage embryos. Phosphorylated on tyrosine residues in response to association with efnb1/ephrin-B1. Expressed equally in both animal-vegetal and dorsal-ventral directions of the early blastula. Becomes enriched on the dorsal side of the embryo after cortical rotation. Expressed along the anterior margin of eye field of neurulae (stage 16 embryos) and in the anterolateral crescent that borders the eye field. Continues to be expressed in the optic cup at stage 26. Expressed in the central nervous system throughout the early tailbud stage including the entire hindbrain.

The protein resides in the cytoplasm. It localises to the cytoplasmic vesicle. The protein localises to the cell projection. It is found in the cilium. Its subcellular location is the nucleus. The protein resides in the cell membrane. Functionally, involved in at least 2 independent signaling cascades, controlling cell fate via canonical Wnt signaling and cell polarity via a planar cell polarity (PCP) cascade. Acts synergistically with dal/dapple-like to activate Wnt signaling, stabilizing ctnnb1/beta-catenin and leading to dorsal axis formation. Also prevents degradation of ctnnb1/beta-catenin by displacing gsk3 from a complex with ARP/Axin-related protein. Has an additional role in anterior-posterior (A/P) axis formation, specifying different neuroectodermal cell fates along the A/P axis in a dose-dependent manner by activating several early patterning genes. In the PCP pathway, required at the cell membrane for PCP-mediated neural and mesodermal convergent extension during gastrulation and subsequent neural tube closure, acting to activate jnk. Also involved in blastopore closure and archenteron elongation during early, but not late, gastrulation. Associates with ephrin receptors and ligands and acts as part of a downstream PCP pathway to mediate ephrin-mediated cell repulsion via activation of rhoa. Required for efnb1/ephrin-B1-driven movement of non-retinal progenitor cells into the retina during eye field formation. Patterns the hindbrain. Required for ciliogenesis. Controls the docking of basal bodies to the apical plasma membrane; mediates the activation, but not localization of rhoa at the apical surface of ciliated cells during basal body docking. Furthermore, required for the association of basal bodies with membrane-bound vesicles and the vesicle-trafficking protein exoc4/sec8, and this association is in turn required for basal body docking. Once basal bodies are docked, required for the planar polarization of basal bodies that underlies ciliary beating and the directional fluid flow across ciliated epithelia. The polypeptide is Segment polarity protein dishevelled homolog DVL-2 (dvl2) (Xenopus laevis (African clawed frog)).